A 305-amino-acid chain; its full sequence is Tetraspanin-12 (305 aa).

The Cytoplasmic portion of the chain corresponds to 1 to 12 (MAREDSVKCLRC). Residues Cys-9 and Cys-12 are each lipidated (S-palmitoyl cysteine). A helical transmembrane segment spans residues 13–33 (LLYALNLLFWLMSISVLAVSA). Residues 34 to 59 (WMRDYLNNVLTLTAETRVEEAVILTY) lie on the Extracellular side of the membrane. The helical transmembrane segment at 60–80 (FPVVHPVMIAVCCFLIIVGML) threads the bilayer. Residues 81-89 (GYCGTVKRN) are Cytoplasmic-facing. Cys-83 carries S-palmitoyl cysteine lipidation. A helical transmembrane segment spans residues 90-110 (LLLLAWYFGSLLVIFCVELAC). The Extracellular portion of the chain corresponds to 111–224 (GVWTYEQELM…RGTKQLQVLR (114 aa)). Residues 225–245 (FLGISIGVTQILAMILTITLL) traverse the membrane as a helical segment. Residues 246-305 (WALYYDRREPGTDQMMSLKNDNSQHLSCPSVELLKPSLSRIFEHTSMANSFNTHFEMEEL) lie on the Cytoplasmic side of the membrane.

It belongs to the tetraspanin (TM4SF) family. In terms of assembly, component of a complex, at least composed of TSPAN12, FZD4 and norrin (NDP). Interacts (when palmitoylated) with ADAM10. Interacts with MMP14/MT1-MMP. Post-translationally, palmitoylated; required for interaction with ADAM10. The precise position of palmitoylated residues is unclear and occurs either on Cys-9, Cys-12 and/or Cys-83.

It is found in the cell membrane. In terms of biological role, regulator of cell surface receptor signal transduction. Plays a central role in retinal vascularization by regulating norrin (NDP) signal transduction. Acts in concert with norrin (NDP) to promote FZD4 multimerization and subsequent activation of FZD4, leading to promote accumulation of beta-catenin (CTNNB1) and stimulate LEF/TCF-mediated transcriptional programs. Suprisingly, it only activates the norrin (NDP)-dependent activation of FZD4, while it does not activate the Wnt-dependent activation of FZD4, suggesting the existence of a Wnt-independent signaling that also promote accumulation the beta-catenin (CTNNB1). Acts as a regulator of membrane proteinases such as ADAM10 and MMP14/MT1-MMP. Activates ADAM10-dependent cleavage activity of amyloid precursor protein (APP). Activates MMP14/MT1-MMP-dependent cleavage activity. This Homo sapiens (Human) protein is Tetraspanin-12 (TSPAN12).